We begin with the raw amino-acid sequence, 245 residues long: Large ribosomal subunit protein uL2 (245 aa).

Residues 196 to 226 are disordered; sequence SPYAHPHGGGSHQKGGTPVSKTAPPGQKVGF.

This sequence belongs to the universal ribosomal protein uL2 family. As to quaternary structure, part of the 50S ribosomal subunit. Forms a bridge to the 30S subunit in the 70S ribosome.

Its function is as follows. One of the primary rRNA binding proteins. Required for association of the 30S and 50S subunits to form the 70S ribosome, for tRNA binding and peptide bond formation. It has been suggested to have peptidyltransferase activity; this is somewhat controversial. Makes several contacts with the 16S rRNA in the 70S ribosome. This is Large ribosomal subunit protein uL2 from Pyrobaculum neutrophilum (strain DSM 2338 / JCM 9278 / NBRC 100436 / V24Sta) (Thermoproteus neutrophilus).